The following is a 134-amino-acid chain: Small ribosomal subunit protein uS8c (134 aa).

Belongs to the universal ribosomal protein uS8 family. Part of the 30S ribosomal subunit.

It localises to the plastid. It is found in the chloroplast. In terms of biological role, one of the primary rRNA binding proteins, it binds directly to 16S rRNA central domain where it helps coordinate assembly of the platform of the 30S subunit. This is Small ribosomal subunit protein uS8c (rps8) from Capsella bursa-pastoris (Shepherd's purse).